Consider the following 103-residue polypeptide: Histone H4 (103 aa).

A compositionally biased stretch (gly residues) spans 1-14 (MSGRGKGGKGLGKG). Residues 1 to 20 (MSGRGKGGKGLGKGGAKRHR) are disordered. Lysine 6 carries the N6-acetyl-N6-methyllysine; alternate modification. Residues lysine 6, lysine 9, and lysine 13 each carry the N6-methyllysine; alternate modification. The residue at position 13 (lysine 13) is an N6-acetyl-N6-methyllysine; alternate. A DNA-binding region spans residues 17 to 21 (KRHRK). Lysine 92 is subject to N6-glutaryllysine.

The protein belongs to the histone H4 family. As to quaternary structure, the nucleosome is a histone octamer containing two molecules each of H2A, H2B, H3 and H4 assembled in one H3-H4 heterotetramer and two H2A-H2B heterodimers. The octamer wraps approximately 147 bp of DNA. Glutarylation at Lys-92 (H4K91glu) destabilizes nucleosomes by promoting dissociation of the H2A-H2B dimers from nucleosomes.

The protein localises to the nucleus. It localises to the chromosome. Its function is as follows. Core component of nucleosome. Nucleosomes wrap and compact DNA into chromatin, limiting DNA accessibility to the cellular machineries which require DNA as a template. Histones thereby play a central role in transcription regulation, DNA repair, DNA replication and chromosomal stability. DNA accessibility is regulated via a complex set of post-translational modifications of histones, also called histone code, and nucleosome remodeling. The protein is Histone H4 (H4.1) of Phanerodontia chrysosporium (White-rot fungus).